The following is a 145-amino-acid chain: MMDVNEIREYLPHRYPFLLVDRVVELVEGESIIAYKNITVNEEVFNGHFPQNPVFPGVMILEAMAQASGILGFKTMGKKPEDGSIYLFAGVDDVRFKRQVVPGDRLQLESRVISEKRGIWKFECKATVDGVLAASATILCADRKV.

Residue His-48 is part of the active site.

Belongs to the thioester dehydratase family. FabZ subfamily.

The protein localises to the cytoplasm. The enzyme catalyses a (3R)-hydroxyacyl-[ACP] = a (2E)-enoyl-[ACP] + H2O. Functionally, involved in unsaturated fatty acids biosynthesis. Catalyzes the dehydration of short chain beta-hydroxyacyl-ACPs and long chain saturated and unsaturated beta-hydroxyacyl-ACPs. This Cellvibrio japonicus (strain Ueda107) (Pseudomonas fluorescens subsp. cellulosa) protein is 3-hydroxyacyl-[acyl-carrier-protein] dehydratase FabZ.